A 451-amino-acid chain; its full sequence is L-seryl-tRNA(Sec) selenium transferase (451 aa).

N6-(pyridoxal phosphate)lysine is present on Lys-286.

Belongs to the SelA family. Pyridoxal 5'-phosphate is required as a cofactor.

The protein resides in the cytoplasm. The enzyme catalyses L-seryl-tRNA(Sec) + selenophosphate + H(+) = L-selenocysteinyl-tRNA(Sec) + phosphate. It functions in the pathway aminoacyl-tRNA biosynthesis; selenocysteinyl-tRNA(Sec) biosynthesis; selenocysteinyl-tRNA(Sec) from L-seryl-tRNA(Sec) (bacterial route): step 1/1. Converts seryl-tRNA(Sec) to selenocysteinyl-tRNA(Sec) required for selenoprotein biosynthesis. The polypeptide is L-seryl-tRNA(Sec) selenium transferase (Aliarcobacter butzleri (strain RM4018) (Arcobacter butzleri)).